Here is a 447-residue protein sequence, read N- to C-terminus: Tektin-4 (447 aa).

2 coiled-coil regions span residues 69–144 (ADRD…ALDA) and 304–423 (FGRR…TNSL). Over residues 72-81 (DQSERQRHES) the composition is skewed to basic and acidic residues. The tract at residues 72-104 (DQSERQRHESQQLAAETEALAQRTQQDSTRKVG) is disordered. Positions 82–97 (QQLAAETEALAQRTQQ) are enriched in low complexity.

Belongs to the tektin family. Microtubule inner protein component of sperm flagellar doublet microtubules. Ubiquitinated, leading to its degradation. Deubiquitinated by USP16, promoting its stability. In terms of tissue distribution, expressed in trachea multiciliated cells.

It is found in the cytoplasm. The protein resides in the cytoskeleton. It localises to the cilium axoneme. The protein localises to the flagellum axoneme. Microtubule inner protein (MIP) part of the dynein-decorated doublet microtubules (DMTs) in cilia and flagellar axoneme. Forms filamentous polymers in the walls of ciliary and flagellar microtubules. Contributes to normal sperm motility. The sequence is that of Tektin-4 (TEKT4) from Bos taurus (Bovine).